A 688-amino-acid polypeptide reads, in one-letter code: Lipase (688 aa).

An N-terminal signal peptide occupies residues 1-35 (MKTRQNKYSIRKFSVGASSILIAALLFMGGGSAQA). A disordered region spans residues 31–309 (GSAQAAEQQQ…KSAKQKQYKN (279 aa)). Residues 36–302 (AEQQQDKGTV…KNEDQTNKSA (267 aa)) constitute a propeptide, removed in mature form. Over residues 45–54 (VENSTTQSIG) the composition is skewed to polar residues. A compositionally biased stretch (low complexity) spans 68–79 (NKNVNEKSNVNS). 3 stretches are compositionally biased toward basic and acidic residues: residues 84-95 (ESLHNETPKNED), 103-117 (SQND…EQNK), and 126-143 (HSEE…KHAS). Polar residues predominate over residues 144–172 (ENNQTLHSKAAQSNEDVKTKPSQLDNTAA). Over residues 173 to 183 (KQEDSQKENLS) the composition is skewed to basic and acidic residues. A compositionally biased stretch (polar residues) spans 184 to 211 (KQDTQSSKTTDLLRATAQNQSKDSQSTE). Residues 240-267 (SKEEPLKVDKQANPTTDKDKSSKNDKGS) show a composition bias toward basic and acidic residues. The segment covering 274-289 (LESNAVATTNKQSKQQ) has biased composition (polar residues). Serine 418 (nucleophile) is an active-site residue. Aspartate 609 acts as the Charge relay system in catalysis. Aspartate 647 contacts Ca(2+). Histidine 648 (charge relay system) is an active-site residue. The Ca(2+) site is built by aspartate 650, aspartate 655, and aspartate 658.

This sequence belongs to the AB hydrolase superfamily. Lipase family.

The protein resides in the secreted. It carries out the reaction a triacylglycerol + H2O = a diacylglycerol + a fatty acid + H(+). This is Lipase (lip) from Staphylococcus epidermidis.